A 459-amino-acid chain; its full sequence is MSTAGVAAQDIRVPLKTGFLHNGQALGNMKTCWGSRNEFEKNFLNIDPITMAYNLNSPAPEHLTTLGCASPSAPGSGHFFAERGPSPKSSLPPLVIPPSESSGQREEDQVLCGFKKLSVNGVCASTPPLTPIQSCSSPFPCAAPCDRSSRPLPPLPISEDPSLDEADCEVEFLTSADTDFLLEDCVPSDFKYDVPGRRSFRGCGQINYAYFDSPTVSVADLSCASDQNRVVPDPNPPPPQSHRRLRRSHSGPAGSFNKPAIRISSCTHRASPSSDEDKPEIPPRVPIPPRPAKPDYRRWSAEVTSNTYSDEDRPPKVPPREPLSRSNSRTPSPKSLPSYLNGVMPPTQSFAPDPKYVSSKALQRQSSEGSAKAPCILPIIENGKKVSSTHYYLLPERPPYLDKYEKYFREAEEANPSTQIQPLPAACGMVSATDKLASRMKMDVGGHGKRKHLSYVVSP.

Position 2 is an N-acetylserine (Ser-2). A phosphothreonine mark is found at Thr-126 and Thr-130. Residues 227 to 352 (QNRVVPDPNP…VMPPTQSFAP (126 aa)) form a disordered region. 2 positions are modified to phosphoserine: Ser-250 and Ser-271. A compositionally biased stretch (polar residues) spans 264 to 273 (SSCTHRASPS). The segment covering 282-291 (PPRVPIPPRP) has biased composition (pro residues). A Phosphoserine modification is found at Ser-300. Over residues 310–323 (DEDRPPKVPPREPL) the composition is skewed to basic and acidic residues. Positions 324–335 (SRSNSRTPSPKS) are enriched in polar residues. Residues 332-361 (SPKSLPSYLNGVMPPTQSFAPDPKYVSSKA) form an interaction with EGFR and ERBB2 and regulation of EGFR activation region. At Ser-458 the chain carries Phosphoserine.

Belongs to the MIG6 family. In terms of assembly, interacts with EGFR and ERBB2.

It localises to the cytoplasm. The protein localises to the cell membrane. Its subcellular location is the nucleus. Its function is as follows. Negative regulator of EGFR signaling in skin morphogenesis. Acts as a negative regulator for several EGFR family members, including ERBB2, ERBB3 and ERBB4. Inhibits EGFR catalytic activity by interfering with its dimerization. Inhibits autophosphorylation of EGFR, ERBB2 and ERBB4. Important for normal keratinocyte proliferation and differentiation. Plays a role in modulating the response to steroid hormones in the uterus. Required for normal response to progesterone in the uterus and for fertility. Mediates epithelial estrogen responses in the uterus by regulating ESR1 levels and activation. Important for regulation of endometrium cell proliferation. Important for normal prenatal and perinatal lung development. The chain is ERBB receptor feedback inhibitor 1 (Errfi1) from Rattus norvegicus (Rat).